The chain runs to 100 residues: Small ribosomal subunit protein bS21 (100 aa).

Residues 61–100 (KLQREGLLPMKPKPVFGAGPGGDRGRGPAAGAGAGPRGPR) form a disordered region. The span at 78-100 (AGPGGDRGRGPAAGAGAGPRGPR) shows a compositional bias: gly residues.

It belongs to the bacterial ribosomal protein bS21 family.

The protein is Small ribosomal subunit protein bS21 of Rhodopseudomonas palustris (strain BisB18).